The primary structure comprises 369 residues: MKKEKKDYYEILGVPRDATQEEIKRAYKRLVKEWHPDRHPENRKEAEQRFKEIQEAYEVLSDPQKRAMYDRFGYVGEQPTYQETESGGFFDDIFREFENIFNRDIFDVFFGERPHQEERREYARRGEDIRYEIEVTLSDLINGAEIPVEYERYETCPRCGGTGVEPNAGYINCPSCGGTGRIREERRSFFGYFVSERTCERCGGTGKIPREYCHECGGSGRVLRKVRKTVKIPPNVEDGTQLRITGGGNAGYYGGPYGDLIVIVRVKPDPRFKKSGSDLVYDITIDYLQAILGTTVEVPLPEGGTTMLKIPPGTQPETVFRLKGKGLPNRYGRRGDLIVNVHVEIPKSLSREERKVLEELAKKRGVTID.

The J domain maps to 7–73 (DYYEILGVPR…QKRAMYDRFG (67 aa)). The CR-type zinc finger occupies 143–225 (GAEIPVEYER…CGGSGRVLRK (83 aa)). Zn(2+) contacts are provided by cysteine 156, cysteine 159, cysteine 173, cysteine 176, cysteine 199, cysteine 202, cysteine 213, and cysteine 216. CXXCXGXG motif repeat units follow at residues 156 to 163 (CPRCGGTG), 173 to 180 (CPSCGGTG), 199 to 206 (CERCGGTG), and 213 to 220 (CHECGGSG).

This sequence belongs to the DnaJ family. In terms of assembly, homodimer. Requires Zn(2+) as cofactor.

The protein resides in the cytoplasm. In terms of biological role, participates actively in the response to hyperosmotic and heat shock by preventing the aggregation of stress-denatured proteins and by disaggregating proteins, also in an autonomous, DnaK-independent fashion. Unfolded proteins bind initially to DnaJ; upon interaction with the DnaJ-bound protein, DnaK hydrolyzes its bound ATP, resulting in the formation of a stable complex. GrpE releases ADP from DnaK; ATP binding to DnaK triggers the release of the substrate protein, thus completing the reaction cycle. Several rounds of ATP-dependent interactions between DnaJ, DnaK and GrpE are required for fully efficient folding. Also involved, together with DnaK and GrpE, in the DNA replication of plasmids through activation of initiation proteins. The chain is Chaperone protein DnaJ from Thermotoga sp. (strain RQ2).